Consider the following 111-residue polypeptide: Small ribosomal subunit protein bS6 (111 aa).

It belongs to the bacterial ribosomal protein bS6 family.

In terms of biological role, binds together with bS18 to 16S ribosomal RNA. This chain is Small ribosomal subunit protein bS6, found in Francisella philomiragia subsp. philomiragia (strain ATCC 25017 / CCUG 19701 / FSC 153 / O#319-036).